Here is a 344-residue protein sequence, read N- to C-terminus: Arginine N-succinyltransferase (344 aa).

A succinyl-CoA-binding site is contributed by Leu-125. His-229 serves as the catalytic Proton donor.

The protein belongs to the arginine N-succinyltransferase family.

It catalyses the reaction succinyl-CoA + L-arginine = N(2)-succinyl-L-arginine + CoA + H(+). It functions in the pathway amino-acid degradation; L-arginine degradation via AST pathway; L-glutamate and succinate from L-arginine: step 1/5. Functionally, catalyzes the transfer of succinyl-CoA to arginine to produce N(2)-succinylarginine. This Shigella boydii serotype 4 (strain Sb227) protein is Arginine N-succinyltransferase.